A 604-amino-acid chain; its full sequence is MHAYRTHNCAALSKKNVGETVRLSGWVHNKRDHGGVLFVDLRDHYGITQIVADEDSAALPVLDKLKLESVVTIDGDVKARDAEAVNPNLPTGEIEVFARSVEIQSRAEELPLIVNSAEDYPEDVRLKYRFVDLRRERLHRNIMLRSQVITSIRNRMTAQGFTEFQTPILAASSPEGARDYIVPSRLHPGTFYALPQAPQMFKQLLMVAGFDRYFQIAPCFRDEDLRADRSPEFYQLDFEMSFVTQEDVFQAIEPVLAGVFEEFANGKSVTKSGEFPRIPYAEAMLKYGTDKPDLRNPLVISDVTDHFQSSGFGLFEKIVGIGGRVRVIPAPNTQEKSRKFFDDMNDWARKEGFAGLGYVTRKQGEFGGPIAKNHGPENMQKIYDELGLGENDGLFFAAGKEKDAAKLAGAARTRVGEELGLIEQGCFKFCWIVDFPMFEYDEELKKIDFSHNPFSMPQGEMEALENKDPLEILAWQYDIVCNGYELSSGAIRNHKPEIMYKAFEIAGYDRETVDREFSGMIEAFKLGAPPHGGSAPGIDRIVMLLADEPNIREVIAFPLNQKAQDLMMGAPSQVPPKALRDVHIRTVEPPKKQQVGTHLVNDDS.

Glutamate 175 contacts L-aspartate. The tract at residues glutamine 199–lysine 202 is aspartate. Residues arginine 221 and histidine 451 each contribute to the L-aspartate site. Arginine 221–glutamate 223 is an ATP binding site. Glutamate 485 is an ATP binding site. Arginine 492 serves as a coordination point for L-aspartate. Glycine 537 to arginine 540 is a binding site for ATP.

It belongs to the class-II aminoacyl-tRNA synthetase family. Type 1 subfamily. As to quaternary structure, homodimer.

It localises to the cytoplasm. The enzyme catalyses tRNA(Asx) + L-aspartate + ATP = L-aspartyl-tRNA(Asx) + AMP + diphosphate. Its function is as follows. Aspartyl-tRNA synthetase with relaxed tRNA specificity since it is able to aspartylate not only its cognate tRNA(Asp) but also tRNA(Asn). Reaction proceeds in two steps: L-aspartate is first activated by ATP to form Asp-AMP and then transferred to the acceptor end of tRNA(Asp/Asn). In Erythrobacter litoralis (strain HTCC2594), this protein is Aspartate--tRNA(Asp/Asn) ligase.